A 208-amino-acid polypeptide reads, in one-letter code: Small ribosomal subunit protein uS4 (208 aa).

Residues 98–158 enclose the S4 RNA-binding domain; sequence GRLDNVVYRM…EKSKKQARIK (61 aa).

It belongs to the universal ribosomal protein uS4 family. Part of the 30S ribosomal subunit. Contacts protein S5. The interaction surface between S4 and S5 is involved in control of translational fidelity.

Its function is as follows. One of the primary rRNA binding proteins, it binds directly to 16S rRNA where it nucleates assembly of the body of the 30S subunit. In terms of biological role, with S5 and S12 plays an important role in translational accuracy. This is Small ribosomal subunit protein uS4 from Haemophilus ducreyi (strain 35000HP / ATCC 700724).